Reading from the N-terminus, the 145-residue chain is Putative pre-16S rRNA nuclease (145 aa).

Belongs to the YqgF nuclease family.

It localises to the cytoplasm. Could be a nuclease involved in processing of the 5'-end of pre-16S rRNA. This chain is Putative pre-16S rRNA nuclease, found in Microcystis aeruginosa (strain NIES-843 / IAM M-2473).